Consider the following 329-residue polypeptide: Octaprenyl diphosphate synthase (329 aa).

Positions 51, 54, and 83 each coordinate isopentenyl diphosphate. Mg(2+) is bound by residues Asp-90 and Asp-94. Arg-99 is a binding site for an all-trans-polyprenyl diphosphate. Residue Arg-100 coordinates isopentenyl diphosphate. 3 residues coordinate an all-trans-polyprenyl diphosphate: Lys-176, Thr-177, and Gln-214.

The protein belongs to the FPP/GGPP synthase family. Mg(2+) serves as cofactor.

It catalyses the reaction 5 isopentenyl diphosphate + (2E,6E)-farnesyl diphosphate = all-trans-octaprenyl diphosphate + 5 diphosphate. Its function is as follows. Supplies octaprenyl diphosphate, the precursor for the side chain of the isoprenoid quinones ubiquinone and menaquinone. The sequence is that of Octaprenyl diphosphate synthase (ispB) from Haemophilus influenzae (strain ATCC 51907 / DSM 11121 / KW20 / Rd).